A 250-amino-acid polypeptide reads, in one-letter code: 5'-nucleotidase SurE (250 aa).

Aspartate 8, aspartate 9, serine 40, and asparagine 94 together coordinate a divalent metal cation.

The protein belongs to the SurE nucleotidase family. A divalent metal cation serves as cofactor.

It is found in the cytoplasm. It carries out the reaction a ribonucleoside 5'-phosphate + H2O = a ribonucleoside + phosphate. Nucleotidase that shows phosphatase activity on nucleoside 5'-monophosphates. The protein is 5'-nucleotidase SurE of Wolbachia pipientis wMel.